The following is a 213-amino-acid chain: UPF0111 protein TM_0914 (213 aa).

Belongs to the UPF0111 family.

The polypeptide is UPF0111 protein TM_0914 (Thermotoga maritima (strain ATCC 43589 / DSM 3109 / JCM 10099 / NBRC 100826 / MSB8)).